A 485-amino-acid polypeptide reads, in one-letter code: MSLFDHSVSELHKKLNNKEISVTDLVEESYKRIADVEDNVKAFLTLDEENARAKAKELDAKIGAEDNGLLFGMPIGVKDNIVTNGLRTTCASKMLANFDPIYDATVVQKLKAADTITIGKLNMDEFAMGSSNENSGFYATKNPWNLDYVPGGSSGGSAAAVAAGEVLFSLGSDTGGSIRQPAAYCGVVGLKPTYGRVSRYGLVAFASSLDQIGPITRTVEDNAYLLQAISGIDRMDATSANVEVGNYLAGLTGDVKGLRIAVPKEYLGEGVGEEARESVLAALKVLEGMGATWEEVSLPHSKYALATYYLLSSSEASANLSRFDGVRYGVRSDNVNNLLDLYKNTRSEGFGDEVKRRIMLGTFALSSGYYDAYYKKAQQVRTLIKNDFENVFANYDVIIGPTTPTPAFKVGEKVDDPMTMYANDILTIPVNLAGVPAISVPCGFGANNMPLGLQIIGKHFDEATIYRVAHAFEQATDYHTKKASL.

Residues K78 and S153 each act as charge relay system in the active site. S177 serves as the catalytic Acyl-ester intermediate.

This sequence belongs to the amidase family. GatA subfamily. As to quaternary structure, heterotrimer of A, B and C subunits.

It catalyses the reaction L-glutamyl-tRNA(Gln) + L-glutamine + ATP + H2O = L-glutaminyl-tRNA(Gln) + L-glutamate + ADP + phosphate + H(+). Allows the formation of correctly charged Gln-tRNA(Gln) through the transamidation of misacylated Glu-tRNA(Gln) in organisms which lack glutaminyl-tRNA synthetase. The reaction takes place in the presence of glutamine and ATP through an activated gamma-phospho-Glu-tRNA(Gln). This Bacillus cereus (strain G9842) protein is Glutamyl-tRNA(Gln) amidotransferase subunit A.